Reading from the N-terminus, the 74-residue chain is Cecropin-P4 (74 aa).

Positions Met-1–Ser-13 are cleaved as a signal peptide. A propeptide spans His-45–Leu-74 (removed in mature form). Residues His-51 to Leu-74 form a disordered region.

This sequence belongs to the cecropin family. Expressed in the body wall, intestine, uterus and ovary.

The protein localises to the secreted. Has antibacterial activity against several Gram-positive and Gram-negative bacteria. Is weakly active against yeasts. Acts by a nonpore mechanism. The protein is Cecropin-P4 (ASCEC-4) of Ascaris suum (Pig roundworm).